The sequence spans 512 residues: Serine palmitoyltransferase 3 (512 aa).

Lys-345 bears the N6-(pyridoxal phosphate)lysine mark.

Belongs to the class-II pyridoxal-phosphate-dependent aminotransferase family. As to quaternary structure, heterodimer of sptl-1/sptl-3. Pyridoxal 5'-phosphate is required as a cofactor.

The enzyme catalyses L-serine + hexadecanoyl-CoA + H(+) = 3-oxosphinganine + CO2 + CoA. The protein operates within lipid metabolism; sphingolipid metabolism. Component of the serine palmitoyltransferase (SPT) that catalyzes the first committed step in sphingolipid biosynthesis, which is the condensation of an acyl-CoA species and L-serine. The catalytic core is composed of a heterodimer of sptl-1 and sptl-2 or sptl-1 and sptl-3. Required for the specification of abicobasal polarity and development of the gut lumen. This Caenorhabditis elegans protein is Serine palmitoyltransferase 3 (sptl-3).